The chain runs to 100 residues: U12-ctenitoxin-Pn1a (100 aa).

The N-terminal stretch at 1–28 (MKYRIFKMKYTLLFLSVIALVHIFAVEA) is a signal peptide. Positions 29–41 (KDEPESDALVPQE) are excised as a propeptide. 5 cysteine pairs are disulfide-bonded: Cys44–Cys58, Cys51–Cys64, Cys57–Cys82, Cys66–Cys80, and Cys90–Cys97.

The protein belongs to the neurotoxin 09 (Tx3-6) family. As to expression, expressed by the venom gland.

It is found in the secreted. Functionally, probable neurotoxin. The polypeptide is U12-ctenitoxin-Pn1a (Phoneutria nigriventer (Brazilian armed spider)).